A 467-amino-acid chain; its full sequence is Dimethylamine methyltransferase MtbB1 (467 aa).

Position 356 (Pyl356) is a non-standard amino acid, pyrrolysine.

It belongs to the dimethylamine methyltransferase family. May form homotetramers or homopentamers.

It carries out the reaction Co(I)-[dimethylamine-specific corrinoid protein] + dimethylamine + H(+) = methyl-Co(III)-[dimethylamine-specific corrinoid protein] + methylamine. Its pathway is one-carbon metabolism; methanogenesis from dimethylamine. Catalyzes the transfer of a methyl group from dimethylamine to the corrinoid cofactor of MtbC. The major or perhaps only DMA methyltransferase expressed under inducing conditions. In Methanosarcina barkeri, this protein is Dimethylamine methyltransferase MtbB1.